Consider the following 152-residue polypeptide: Ubiquitin-conjugating enzyme E2 N (152 aa).

A UBC core domain is found at 3 to 149 (GLPRRIIKET…ARAWTRLYAM (147 aa)). Residue Lys-82 is modified to N6-acetyllysine. Residue Cys-87 is the Glycyl thioester intermediate of the active site. Lys-92 participates in a covalent cross-link: Glycyl lysine isopeptide (Lys-Gly) (interchain with G-Cter in ISG15). Phosphoserine is present on Ser-131.

Belongs to the ubiquitin-conjugating enzyme family. Heterodimer with UBE2V2. Interacts (UBE2V2-UBE2N heterodimer) with the E3 ligase STUB1 (via the U-box domain); the complex has a specific 'Lys-63'-linked polyubiquitination activity. Interacts with RNF8 and RNF168. Interacts with RNF11. Interacts with the E3 ligases, HLTF and SHPRH; the interactions promote the 'Lys-63'-linked polyubiquitination of PCNA upon genotoxic stress and lead to DNA repair. Interacts with ARIH2 (via RING-type 2). Interacts with OTUB1; leading to inhibit E2-conjugating activity. Interacts with GPS2; leading to inhibit E2-conjugating activity. Interacts with RIGI and RNF135; involved in RIGI ubiquitination and activation. Post-translationally, conjugation to ISG15 impairs formation of the thioester bond with ubiquitin but not interaction with UBE2V2.

The enzyme catalyses S-ubiquitinyl-[E1 ubiquitin-activating enzyme]-L-cysteine + [E2 ubiquitin-conjugating enzyme]-L-cysteine = [E1 ubiquitin-activating enzyme]-L-cysteine + S-ubiquitinyl-[E2 ubiquitin-conjugating enzyme]-L-cysteine.. The protein operates within protein modification; protein ubiquitination. Activity is inhibited by binding to OTUB1, which prevents 'Lys-63'-linked polyubiquitination. Activity is inhibited by GPS2, leading to prevent 'Lys-63'-linked polyubiquitination. Its function is as follows. The UBE2V1-UBE2N and UBE2V2-UBE2N heterodimers catalyze the synthesis of non-canonical 'Lys-63'-linked polyubiquitin chains. This type of polyubiquitination does not lead to protein degradation by the proteasome. Mediates transcriptional activation of target genes. Plays a role in the control of progress through the cell cycle and differentiation. Plays a role in the error-free DNA repair pathway and contributes to the survival of cells after DNA damage. Acts together with the E3 ligases, HLTF and SHPRH, in the 'Lys-63'-linked poly-ubiquitination of PCNA upon genotoxic stress, which is required for DNA repair. Appears to act together with E3 ligase RNF5 in the 'Lys-63'-linked polyubiquitination of JKAMP thereby regulating JKAMP function by decreasing its association with components of the proteasome and ERAD. Promotes TRIM5 capsid-specific restriction activity and the UBE2V1-UBE2N heterodimer acts in concert with TRIM5 to generate 'Lys-63'-linked polyubiquitin chains which activate the MAP3K7/TAK1 complex which in turn results in the induction and expression of NF-kappa-B and MAPK-responsive inflammatory genes. Together with RNF135 and UB2V1, catalyzes the viral RNA-dependent 'Lys-63'-linked polyubiquitination of RIGI to activate the downstream signaling pathway that leads to interferon beta production. UBE2V1-UBE2N together with TRAF3IP2 E3 ubiquitin ligase mediate 'Lys-63'-linked polyubiquitination of TRAF6, a component of IL17A-mediated signaling pathway. The protein is Ubiquitin-conjugating enzyme E2 N (Ube2n) of Rattus norvegicus (Rat).